Here is a 212-residue protein sequence, read N- to C-terminus: MASLLLFVLVIQIITYLINTIGARTIDSLLWLLYIKLPNQASQVAREQRHAKLEVIRLKREMSATSSQDEFAKWAKLRRRHDKAMEEYDVKNKKLSALKTSFDWTIKTVRWVSTTGVTVILQFWFSKSPIFDLPRGWLPWQVEWILSFPRAPLGTVSIQVWGGACGTVIALVGGAMGVAAPAFKKINQPRGEAQKMGTPRGSREQTPVRKTQ.

The Lumenal portion of the chain corresponds to 1-4 (MASL). The chain crosses the membrane as a helical span at residues 5–24 (LLFVLVIQIITYLINTIGAR). Residues 25-110 (TIDSLLWLLY…SFDWTIKTVR (86 aa)) lie on the Cytoplasmic side of the membrane. Residues 75-99 (AKLRRRHDKAMEEYDVKNKKLSALK) are a coiled coil. Residues 111-131 (WVSTTGVTVILQFWFSKSPIF) traverse the membrane as a helical segment. The Lumenal portion of the chain corresponds to 132–155 (DLPRGWLPWQVEWILSFPRAPLGT). The helical transmembrane segment at 156–172 (VSIQVWGGACGTVIALV) threads the bilayer. Topologically, residues 173 to 212 (GGAMGVAAPAFKKINQPRGEAQKMGTPRGSREQTPVRKTQ) are cytoplasmic. The interval 189 to 212 (PRGEAQKMGTPRGSREQTPVRKTQ) is disordered. A compositionally biased stretch (basic and acidic residues) spans 201-212 (GSREQTPVRKTQ).

It belongs to the WRB/GET1 family. In terms of assembly, interacts with GET3.

It localises to the endoplasmic reticulum membrane. Functionally, required for the post-translational delivery of tail-anchored (TA) proteins to the endoplasmic reticulum. Acts as a membrane receptor for soluble GET3, which recognizes and selectively binds the transmembrane domain of TA proteins in the cytosol. The sequence is that of Protein GET1 from Arthroderma otae (strain ATCC MYA-4605 / CBS 113480) (Microsporum canis).